A 380-amino-acid polypeptide reads, in one-letter code: Phospho-N-acetylmuramoyl-pentapeptide-transferase (380 aa).

9 helical membrane-spanning segments follow: residues 25–45 (RAAAAFVTALLVSFILGPAII), 70–90 (TTPTMGGLIILAATFAPVLLW), 98–118 (VLLAMAVTAWMGVIGFLDDYL), 142–162 (VLCGLGLGAYLLLSPISTLPG), 173–193 (VLVVPAVAWAAWLYIPWVTFI), 209–229 (GLSSGLVAIAVLTLGLFAYVL), 245–265 (GAGELTVFCAAVVGACIGFLW), 272–294 (QVFMGDTGSLALGGAVGAIAILL), and 357–377 (QVVVRFWIIGILCAILALSTL).

It belongs to the glycosyltransferase 4 family. MraY subfamily. Mg(2+) is required as a cofactor.

It is found in the cell inner membrane. It carries out the reaction UDP-N-acetyl-alpha-D-muramoyl-L-alanyl-gamma-D-glutamyl-meso-2,6-diaminopimeloyl-D-alanyl-D-alanine + di-trans,octa-cis-undecaprenyl phosphate = di-trans,octa-cis-undecaprenyl diphospho-N-acetyl-alpha-D-muramoyl-L-alanyl-D-glutamyl-meso-2,6-diaminopimeloyl-D-alanyl-D-alanine + UMP. The protein operates within cell wall biogenesis; peptidoglycan biosynthesis. Catalyzes the initial step of the lipid cycle reactions in the biosynthesis of the cell wall peptidoglycan: transfers peptidoglycan precursor phospho-MurNAc-pentapeptide from UDP-MurNAc-pentapeptide onto the lipid carrier undecaprenyl phosphate, yielding undecaprenyl-pyrophosphoryl-MurNAc-pentapeptide, known as lipid I. The polypeptide is Phospho-N-acetylmuramoyl-pentapeptide-transferase (Gemmatimonas aurantiaca (strain DSM 14586 / JCM 11422 / NBRC 100505 / T-27)).